Consider the following 355-residue polypeptide: Methylthioribose-1-phosphate isomerase (355 aa).

Substrate contacts are provided by residues 50–52 (RGA), Arg93, and Gln198. Catalysis depends on Asp239, which acts as the Proton donor. Residue 249-250 (NK) participates in substrate binding.

It belongs to the eIF-2B alpha/beta/delta subunits family. MtnA subfamily. Homodimer.

It carries out the reaction 5-(methylsulfanyl)-alpha-D-ribose 1-phosphate = 5-(methylsulfanyl)-D-ribulose 1-phosphate. The protein operates within amino-acid biosynthesis; L-methionine biosynthesis via salvage pathway; L-methionine from S-methyl-5-thio-alpha-D-ribose 1-phosphate: step 1/6. In terms of biological role, catalyzes the interconversion of methylthioribose-1-phosphate (MTR-1-P) into methylthioribulose-1-phosphate (MTRu-1-P). The polypeptide is Methylthioribose-1-phosphate isomerase (Geobacillus kaustophilus (strain HTA426)).